A 318-amino-acid chain; its full sequence is Very-long-chain 3-oxoacyl-CoA reductase-B (318 aa).

Residues 15 to 35 (FWYLGVVAATWWGLRAAWCLL) form a helical membrane-spanning segment. 54-83 (GKWAVVTGATDGIGKAYAEELARRGMNIVL) provides a ligand contact to NADP(+). A run of 2 helical transmembrane segments spans residues 187–207 (GVVL…LTVY) and 281–301 (AITG…SMGM). Residue serine 194 participates in substrate binding. The active-site Proton acceptor is tyrosine 207.

It belongs to the short-chain dehydrogenases/reductases (SDR) family. 17-beta-HSD 3 subfamily.

The protein resides in the endoplasmic reticulum membrane. It catalyses the reaction a very-long-chain (3R)-3-hydroxyacyl-CoA + NADP(+) = a very-long-chain 3-oxoacyl-CoA + NADPH + H(+). The enzyme catalyses 17beta-estradiol + NAD(+) = estrone + NADH + H(+). The catalysed reaction is 17beta-estradiol + NADP(+) = estrone + NADPH + H(+). It participates in lipid metabolism; fatty acid biosynthesis. The protein operates within steroid biosynthesis; estrogen biosynthesis. In terms of biological role, catalyzes the second of the four reactions of the long-chain fatty acids elongation cycle. This endoplasmic reticulum-bound enzymatic process, allows the addition of two carbons to the chain of long- and very long-chain fatty acids/VLCFAs per cycle. This enzyme has a 3-ketoacyl-CoA reductase activity, reducing 3-ketoacyl-CoA to 3-hydroxyacyl-CoA, within each cycle of fatty acid elongation. Thereby, it may participate in the production of VLCFAs of different chain lengths that are involved in multiple biological processes as precursors of membrane lipids and lipid mediators. May also catalyze the transformation of estrone (E1) into estradiol (E2) and play a role in estrogen formation. This is Very-long-chain 3-oxoacyl-CoA reductase-B (hsd17b12-b) from Xenopus laevis (African clawed frog).